We begin with the raw amino-acid sequence, 115 residues long: Synaptobrevin homolog 2 (115 aa).

The span at 1-16 (MSSSVPYDPYVPPEES) shows a compositional bias: low complexity. The segment at 1–28 (MSSSVPYDPYVPPEESNSGANPNSQNKT) is disordered. Topologically, residues 1–93 (MSSSVPYDPY…MWWKDLKMRM (93 aa)) are cytoplasmic. A compositionally biased stretch (polar residues) spans 17 to 28 (NSGANPNSQNKT). The v-SNARE coiled-coil homology domain occupies 27-87 (KTAALRQEID…NRVRKQMWWK (61 aa)). S58 carries the phosphoserine modification. K62 is covalently cross-linked (Glycyl lysine isopeptide (Lys-Gly) (interchain with G-Cter in ubiquitin)). C94 carries S-palmitoyl cysteine lipidation. The helical; Anchor for type IV membrane protein transmembrane segment at 94–112 (CLFLVVIILLVVIIVPIVV) threads the bilayer. The Vesicular segment spans residues 113–115 (HFS).

This sequence belongs to the synaptobrevin family. Post-translationally, palmitoylated by SWF1.

The protein resides in the endomembrane system. Its function is as follows. SNC1 and SNC2 are vesicle-targeting proteins essential for normal secretory traffic between the Golgi and the plasma membrane. They may also be involved in vesicle fusion. In Saccharomyces cerevisiae (strain ATCC 204508 / S288c) (Baker's yeast), this protein is Synaptobrevin homolog 2 (SNC2).